A 1093-amino-acid polypeptide reads, in one-letter code: MADIIERIRSQDEYREFYELATKIRNQKLLTDAELHSLNRHQQEVSDNEIKLLTEAWRSSYWNNVGRQLKNQALEPTIACRLLKEISETEALPAYKHVGHHFSTLDQLLTILYNEPQSVAELLNSIDRNDITSNDSTIQVLFHLVYSCALYPEDELKIAQVVCNLLKLQLYRSGSEMRTILRKETSISTRFYKHFVELIHPTMVYLTKALRKGVLDVIQLGSFWLDIDAKQSTARFLRDNKQNEDRLPEYRALVVSKLVDFVDTFLENISKALPMLPPNLNWIIRDIFCSLYEVVDDVSAIELSHACKDMIVSNLICPAIISPQKFGVVDNDVRVGTIVNHNLVQIAMIIQMISLREFESPPEEYKEFLSQCRNTHLISEMMDALLVEKLAPDVEITSLIANGTAESDMATKSSFVGTVADVNVLIKIIRNAPSTSDAKLSRILSVCDKLPATISSTTQKSHFDNLEASPKISTLRNIHRKVQHSFKRTGDSFNDINELGAKQGEALAFGKENFDLFYLEYSPKNYKDVAEADRLKKKAEERRQLADLEKLLEPTPAPKETPVENNLIDFSSGSAETNSEHLSDSTSVSPEPLTSTEELQIGDQGVGGEQRGKLAKLKSLSDRMKKGITQSNTLSDIREHLRRSGSFVKPPPSGIPTSSSEQNLPDVATGPRDDILAKYASISSIKEQKPALGNLIDGTASASSTPRKEPLEPYYSSENLVGCRAFQDTLRKMITVLGNISYLPRIGYRNETKQNEWDKKVLLGRFLDGVLVETEHRREYGLAAQLREVKRCIELFEHAGVEILMDHLKLNEAEQDKIVNGMREERASLMRKSNDISSLEQRVLLNRRLTEQILVDFLMRTFLETGFNNKHTVGKTQEVTAVLKFYDEFKYLRAQDERAEFLKNLLTFLRDRLMQNVDWNFATDTMMSRAMTTIERYVIFAVYDNAFYPNRDADHHRDKLLRGTIAKVSDVVTPVNDFLKIPEHLHGEAPWPSAQAELSMLDIYVTAQDKLNCVVRCCDVINNLVALSSKNAVASADDLTPVLVFVIIKANPRALLSNVQFVETFAGDRIESGRDAYYWVNFKSAVEYIKTIL.

The Ras-GAP domain occupies 156-389 (LKIAQVVCNL…EMMDALLVEK (234 aa)). 2 disordered regions span residues 547–610 (DLEK…GGEQ) and 643–669 (RSGSFVKPPPSGIPTSSSEQNLPDVAT). Composition is skewed to polar residues over residues 568-577 (IDFSSGSAET) and 584-598 (DSTSVSPEPLTSTEE). One can recognise a VPS9 domain in the interval 955 to 1093 (HHRDKLLRGT…SAVEYIKTIL (139 aa)).

Belongs to the GAPVD1 family. Interacts with GDP-bound rab-5. Interacts with alpha-adaptin.

The protein resides in the membrane. Its subcellular location is the cytoplasmic vesicle. The protein localises to the clathrin-coated vesicle. Its function is as follows. Acts both as a GTPase-activating protein (GAP) and a guanine nucleotide exchange factor (GEF), and participates in endocytosis. Acts by regulating the activation of rab-5 by exchanging bound GDP for free GTP at clathrin coated pits. The sequence is that of Receptor-mediated endocytosis protein 6 (rme-6) from Caenorhabditis elegans.